Reading from the N-terminus, the 425-residue chain is MIDIKLIRQNPDLVKEALRKRGEDPATIDEILKIDADWRTTITKTNELRSRRNEISKNVARLKKEGKNTEAEALIEEGKRLGEEIKALEEKEKELQKQLNDLLLMVPNIPHESVPVGEDESQNVEVRRWGEPREFDFTPLAHWDLGPAWGLMDFDRATKLSGSRFTVMYGKLARLERALINFMLDVHTKEHGYTEVWVPHLVKRETITITGQLPKFEEELYLAERDDLFLIPTAEVPLAALHSGEILEEKELPKKYVAYTPCYRREAGSYGKDVRGMIRQHQFDKVELVWVTTPERSFEDLEQLVKDAETILQKLELPYRVVSLCTGDLGFTSAKTYDIEVWLPSYNAYKEISSCSNVTDFQARRGNMRYRRRSDGKLEYVHTLNGSGIAVGRALVAILENYQQPDGSVRVPEVLVPYTGFEVIP.

Threonine 233 to glutamate 235 lines the L-serine pocket. Arginine 264 to glutamate 266 contributes to the ATP binding site. Glutamate 287 is a binding site for L-serine. Residue glutamate 351–serine 354 participates in ATP binding. Serine 387 contributes to the L-serine binding site.

It belongs to the class-II aminoacyl-tRNA synthetase family. Type-1 seryl-tRNA synthetase subfamily. In terms of assembly, homodimer. The tRNA molecule binds across the dimer.

Its subcellular location is the cytoplasm. It catalyses the reaction tRNA(Ser) + L-serine + ATP = L-seryl-tRNA(Ser) + AMP + diphosphate + H(+). The catalysed reaction is tRNA(Sec) + L-serine + ATP = L-seryl-tRNA(Sec) + AMP + diphosphate + H(+). It functions in the pathway aminoacyl-tRNA biosynthesis; selenocysteinyl-tRNA(Sec) biosynthesis; L-seryl-tRNA(Sec) from L-serine and tRNA(Sec): step 1/1. Functionally, catalyzes the attachment of serine to tRNA(Ser). Is also able to aminoacylate tRNA(Sec) with serine, to form the misacylated tRNA L-seryl-tRNA(Sec), which will be further converted into selenocysteinyl-tRNA(Sec). The chain is Serine--tRNA ligase from Thermotoga petrophila (strain ATCC BAA-488 / DSM 13995 / JCM 10881 / RKU-1).